The primary structure comprises 509 residues: Cytochrome P450 monooxygenase cpaH (509 aa).

Asn15 is a glycosylation site (N-linked (GlcNAc...) asparagine). A helical membrane pass occupies residues 31 to 51 (TTILLIGVTYCILVGIYRVTL). 2 N-linked (GlcNAc...) asparagine glycosylation sites follow: Asn306 and Asn412. Heme is bound at residue Cys453.

Belongs to the cytochrome P450 family. It depends on heme as a cofactor.

The protein localises to the membrane. Its pathway is secondary metabolite biosynthesis. Functionally, cytochrome P450 monooxygenase; part of the gene cluster that mediates the biosynthesis of the fungal neurotoxin cyclopiazonic acid (CPA), a nanomolar inhibitor of Ca(2+)-ATPase with a unique pentacyclic indole tetramic acid scaffold. The hybrid two module polyketide synthase-nonribosomal peptide synthetase (PKS-NRPS) cpaS incorporates acetyl-CoA, malonyl-CoA, and tryptophan (Trp) and utilizes a C-terminal redox-incompetent reductase domain to make and release the tryptophan tetramic acid, cyclo-acetoacetyl-L-tryptophan (c-AATrp), as the first intermediate in the pathway. CpaS catalyzes a Dieckmann-type cyclization on the N-acetoacetyl-Trp intermediate bound in thioester linkage to the phosphopantetheinyl arm of the T domain to form and release c-AATrp. CpaD then regiospecifically dimethylallylates c-AATrp to form beta-cyclopiazonic acid. CpaD discriminates against free Trp but accepts tryptophan-containing thiohydantoins, diketopiperazines, and linear peptides as substrates for C4-prenylation and also acts as a regiospecific O-dimethylallyltransferase (DMAT) on a tyrosine-derived tetramic acid. The beta-cyclopiazonate dehydrogenase cpaO then carries out the dehydrogenation of beta-CPA to yield an unstable enimine product, which is captured by intramolecular cyclization to create the pentacyclic fused scaffold of alpha-cyclopiazonate. Finally, the cytochrome P450 monooxygenase cpaH mediates the conversion of CPA into the less toxic 2-oxocyclopiazonic acid, the end product of the CPA pathway in A.oryza. This chain is Cytochrome P450 monooxygenase cpaH, found in Aspergillus oryzae (Yellow koji mold).